Here is a 507-residue protein sequence, read N- to C-terminus: MVTIRADEISKIIRERIEEYNREVKIVNTGTVLQVGDGIARIHGLDEVMAGELVEFQEGTVGIALNLESTNVGVVLMGDGLLIQEGSSVKATGRIAQIPVSEAYLGRVVNALAKPIDGRGEISASEYRLIESPAPGIISRRSVYEPLQTGLIAIDSMIPIGRGQRELIIGDRQTGKTAVATDTILNQQGQNVICVYVAIGQKASSVAQVVTNFQERGAMEYTIVVAETADSPATLQYLAPYTGAALAEFFMYRKRHTLIIYDDPSKQAQAYRQMSLLLRRPPGREAYPGDVFYLHSRLLERAAKLGSLLGEGSMTALPIVETQSGDVSAYIPTNVISITDGQIFLSADLFNAGIRPAINVGISVSRVGSAAQIKAMKQVAGKLKLELAQFAELEAFAQFASDLDKATQNQLARGQRLRELLKQSQSAPLAVEEQIMTIYTGTNGYLDSLEIGQVRKFLVELRTYLKTNKPQFQEIISSTKIFTEEAEALLKEAIQEQMERFILQEQV.

Residue 170–177 (GDRQTGKT) coordinates ATP.

This sequence belongs to the ATPase alpha/beta chains family. F-type ATPases have 2 components, CF(1) - the catalytic core - and CF(0) - the membrane proton channel. CF(1) has five subunits: alpha(3), beta(3), gamma(1), delta(1), epsilon(1). CF(0) has four main subunits: a, b, b' and c.

It is found in the plastid. It localises to the chloroplast thylakoid membrane. It carries out the reaction ATP + H2O + 4 H(+)(in) = ADP + phosphate + 5 H(+)(out). Functionally, produces ATP from ADP in the presence of a proton gradient across the membrane. The alpha chain is a regulatory subunit. The polypeptide is ATP synthase subunit alpha, chloroplastic (Daucus carota (Wild carrot)).